Here is a 209-residue protein sequence, read N- to C-terminus: Probable transcriptional regulator ycf29 (209 aa).

Positions 4 to 120 (NLMLVENDTV…ELVSLIKNLI (117 aa)) constitute a Response regulatory domain. 4-aspartylphosphate is present on D53. In terms of domain architecture, HTH luxR-type spans 139–204 (PLFQLLYLTP…LLVKYSIKNN (66 aa)).

It is found in the plastid. The protein localises to the chloroplast. In Porphyra purpurea (Red seaweed), this protein is Probable transcriptional regulator ycf29 (ycf29).